We begin with the raw amino-acid sequence, 154 residues long: CASP-like protein 5B2 (154 aa).

The Cytoplasmic portion of the chain corresponds to 1–10 (MKKLLGGPGT). Residues 11 to 31 (VCGLLLRIGQCASAAASIGVM) form a helical membrane-spanning segment. Over 32-42 (VSAKEFSVHTA) the chain is Extracellular. A helical transmembrane segment spans residues 43–63 (FCYLIASMGLQLLWSFGLACL). The Cytoplasmic portion of the chain corresponds to 64–77 (DVYALRGKKDLQNP). The helical transmembrane segment at 78-98 (ILVSLFVVGDWVTAMLSLAAA) threads the bilayer. At 99–129 (CSSAGVVVLYEKDIKYCNTQSQYPCLRYEVA) the chain is on the extracellular side. A helical membrane pass occupies residues 130-150 (VALSFVTWIQIAVSSHVTFWI). At 151-154 (LASV) the chain is on the cytoplasmic side.

Belongs to the Casparian strip membrane proteins (CASP) family. Homodimer and heterodimers. Expressed in the stele of the root.

Its subcellular location is the cell membrane. This Arabidopsis thaliana (Mouse-ear cress) protein is CASP-like protein 5B2.